The sequence spans 162 residues: NADH-ubiquinone oxidoreductase chain 6 (162 aa).

5 helical membrane-spanning segments follow: residues 1-21 (MFFENSAILLCALLSIAVGYT), 32-52 (VMLFINSSFVLMMLGFEFLAL), 55-75 (LLVYVGALAVLFLFVIMLLEI), 87-107 (WSTLGIFVFIINGVFQITPSM), and 129-149 (LYLYFADLLILNSLVLTVALF).

Belongs to the complex I subunit 6 family.

The protein resides in the mitochondrion membrane. The catalysed reaction is a ubiquinone + NADH + 5 H(+)(in) = a ubiquinol + NAD(+) + 4 H(+)(out). Functionally, core subunit of the mitochondrial membrane respiratory chain NADH dehydrogenase (Complex I) that is believed to belong to the minimal assembly required for catalysis. Complex I functions in the transfer of electrons from NADH to the respiratory chain. The immediate electron acceptor for the enzyme is believed to be ubiquinone. This chain is NADH-ubiquinone oxidoreductase chain 6 (ND6), found in Chlamydomonas reinhardtii (Chlamydomonas smithii).